The following is a 431-amino-acid chain: Histidinol dehydrogenase 1 (431 aa).

NAD(+) contacts are provided by Tyr127, Gln188, and Asn211. Residues Ser234, Gln256, and His259 each coordinate substrate. Zn(2+) contacts are provided by Gln256 and His259. Residues Glu324 and His325 each act as proton acceptor in the active site. His325, Asp358, Glu412, and His417 together coordinate substrate. Zn(2+) is bound at residue Asp358. His417 is a binding site for Zn(2+).

Belongs to the histidinol dehydrogenase family. It depends on Zn(2+) as a cofactor.

The enzyme catalyses L-histidinol + 2 NAD(+) + H2O = L-histidine + 2 NADH + 3 H(+). The protein operates within amino-acid biosynthesis; L-histidine biosynthesis; L-histidine from 5-phospho-alpha-D-ribose 1-diphosphate: step 9/9. Catalyzes the sequential NAD-dependent oxidations of L-histidinol to L-histidinaldehyde and then to L-histidine. The polypeptide is Histidinol dehydrogenase 1 (Trichormus variabilis (strain ATCC 29413 / PCC 7937) (Anabaena variabilis)).